A 269-amino-acid chain; its full sequence is Centromere protein K (269 aa).

A compositionally biased stretch (acidic residues) spans 1-10 (MNQEDLDPDS). A disordered region spans residues 1-20 (MNQEDLDPDSTTDVGDVTNT). 2 coiled-coil regions span residues 22–42 (EELI…QNKL) and 98–151 (QKLR…NKVE).

It belongs to the CENP-K/MCM22 family. As to quaternary structure, component of the CENPA-CAD complex, composed of CENPI, CENPK, CENPL, CENPO, CENPP, CENPQ, CENPR and CENPS. The CENPA-CAD complex interacts with the CENPA-NAC complex, at least composed of CENPA, CENPC, CENPH, CENPM, CENPN, CENPT and CENPU. Interacts directly with CENPH. In terms of tissue distribution, detected in several fetal organs with highest levels in fetal liver. In adults, it is weakly expressed in lung and placenta.

The protein localises to the nucleus. It is found in the chromosome. Its subcellular location is the centromere. The protein resides in the kinetochore. Functionally, component of the CENPA-CAD (nucleosome distal) complex, a complex recruited to centromeres which is involved in assembly of kinetochore proteins, mitotic progression and chromosome segregation. May be involved in incorporation of newly synthesized CENPA into centromeres via its interaction with the CENPA-NAC complex. Acts in coordination with KNL1 to recruit the NDC80 complex to the outer kinetochore. This is Centromere protein K (CENPK) from Homo sapiens (Human).